The primary structure comprises 596 residues: Phosphoenolpyruvate carboxykinase [GTP] (596 aa).

Substrate is bound by residues Arg77 and 205–207; that span reads YGG. Residues Lys214 and His234 each coordinate Mn(2+). Residue Ser256 participates in substrate binding. Residue 257 to 262 participates in GTP binding; sequence ACGKTN. The active site involves Cys258. Asp283 provides a ligand contact to Mn(2+). The segment at 362–388 is disordered; sequence KKGSTEKAAHPNSRFTAPAKNNPAISP. 373-375 lines the substrate pocket; it reads NSR. GTP-binding positions include Arg375, Arg406, and 499–502; that span reads YGDN.

Belongs to the phosphoenolpyruvate carboxykinase [GTP] family. In terms of assembly, monomer. It depends on Mn(2+) as a cofactor.

The protein resides in the cytoplasm. It carries out the reaction oxaloacetate + GTP = phosphoenolpyruvate + GDP + CO2. The protein operates within carbohydrate biosynthesis; gluconeogenesis. Its function is as follows. Catalyzes the conversion of oxaloacetate (OAA) to phosphoenolpyruvate (PEP), the rate-limiting step in the metabolic pathway that produces glucose from lactate and other precursors derived from the citric acid cycle. In Anaeromyxobacter dehalogenans (strain 2CP-C), this protein is Phosphoenolpyruvate carboxykinase [GTP].